A 127-amino-acid chain; its full sequence is Small ribosomal subunit protein uS11 (127 aa).

It belongs to the universal ribosomal protein uS11 family. As to quaternary structure, part of the 30S ribosomal subunit. Interacts with proteins S7 and S18. Binds to IF-3.

Its function is as follows. Located on the platform of the 30S subunit, it bridges several disparate RNA helices of the 16S rRNA. Forms part of the Shine-Dalgarno cleft in the 70S ribosome. This is Small ribosomal subunit protein uS11 from Chlorobium phaeobacteroides (strain BS1).